We begin with the raw amino-acid sequence, 279 residues long: Secreted RxLR effector protein 152 (279 aa).

The first 22 residues, 1 to 22, serve as a signal peptide directing secretion; sequence MRNGSVLFGLFFIGHSCSVLLA. The RxLR-dEER signature appears at 47 to 62; it reads RTLQADDSERTLAEER.

It belongs to the RxLR effector family.

It is found in the secreted. Its subcellular location is the host nucleus. Functionally, secreted effector that completely suppresses the host cell death induced by cell death-inducing proteins. In Plasmopara viticola (Downy mildew of grapevine), this protein is Secreted RxLR effector protein 152.